The sequence spans 1802 residues: Transposon Ty4-H Gag-Pol polyprotein (1802 aa).

Residues arginine 39 to asparagine 115 adopt a coiled-coil conformation. Residues asparagine 381–tyrosine 501 form a ty4 protease region. Aspartate 414 functions as the For protease activity; shared with dimeric partner in the catalytic mechanism. An integrase-type zinc finger-like region spans residues alanine 539–cysteine 599. The 168-residue stretch at threonine 619–proline 786 folds into the Integrase catalytic domain. Aspartate 630 and aspartate 695 together coordinate Mg(2+). The interval lysine 1223–lysine 1248 is disordered. The Reverse transcriptase Ty1/copia-type domain occupies arginine 1375–asparagine 1510. The Mg(2+) site is built by aspartate 1383, aspartate 1462, aspartate 1463, aspartate 1644, glutamate 1686, and aspartate 1720. Residues aspartate 1644 to lysine 1790 form the RNase H Ty1/copia-type domain.

The protease is a homodimer, whose active site consists of two apposed aspartic acid residues. Proteolytically processed into capsid protein (CA), Ty4 protease (PR), integrase (IN) and reverse transcriptase/ribonuclease H (RT) proteins. Initially, virus-like particles (VLPs) are composed of the structural unprocessed proteins Gag and Gag-Pol, and also contain the host initiator methionine tRNA (tRNA(i)-Met) which serves as a primer for minus-strand DNA synthesis, and a dimer of genomic Ty RNA. Processing of the polyproteins occurs within the particle and proceeds by an ordered pathway, called maturation. First, the protease (PR) is released by autocatalytic cleavage of the Gag-Pol polyprotein, and this cleavage is a prerequisite for subsequent processing at the remaining sites to release the mature structural and catalytic proteins. Maturation takes place prior to the RT reaction and is required to produce transposition-competent VLPs.

The protein resides in the cytoplasm. It localises to the nucleus. It catalyses the reaction DNA(n) + a 2'-deoxyribonucleoside 5'-triphosphate = DNA(n+1) + diphosphate. The catalysed reaction is Endonucleolytic cleavage to 5'-phosphomonoester.. Functionally, capsid protein (CA) is the structural component of the virus-like particle (VLP), forming the shell that encapsulates the retrotransposons dimeric RNA genome. The aspartyl protease (PR) mediates the proteolytic cleavages of the Gag and Gag-Pol polyproteins after assembly of the VLP. In terms of biological role, reverse transcriptase/ribonuclease H (RT) is a multifunctional enzyme that catalyzes the conversion of the retro-elements RNA genome into dsDNA within the VLP. The enzyme displays a DNA polymerase activity that can copy either DNA or RNA templates, and a ribonuclease H (RNase H) activity that cleaves the RNA strand of RNA-DNA heteroduplexes during plus-strand synthesis and hydrolyzes RNA primers. The conversion leads to a linear dsDNA copy of the retrotransposon that includes long terminal repeats (LTRs) at both ends. Its function is as follows. Integrase (IN) targets the VLP to the nucleus, where a subparticle preintegration complex (PIC) containing at least integrase and the newly synthesized dsDNA copy of the retrotransposon must transit the nuclear membrane. Once in the nucleus, integrase performs the integration of the dsDNA into the host genome. The protein is Transposon Ty4-H Gag-Pol polyprotein (TY4B-H) of Saccharomyces cerevisiae (strain ATCC 204508 / S288c) (Baker's yeast).